A 755-amino-acid polypeptide reads, in one-letter code: Oligopeptide transporter 1 (755 aa).

A run of 13 helical transmembrane segments spans residues 58–78, 82–102, 134–154, 165–185, 226–246, 298–318, 370–390, 434–454, 462–482, 546–566, 614–634, 664–684, and 697–717; these read TWTLGLFSCILLAFVNQFFGF, QLWVSSVAAQIVTLPLGKLMA, ITIFANTGAGGVYATSIITIV, AAAMLLTQTTQLLGYGWAGIF, FFIIVFCVSFAYYIIPGYLFP, FFAIANFFGGFFIFLYIVLPI, YLSVMFALLYGLSFGSLCATI, WWFIAVLVISFAFALYACEGF, WWGLILACAIALFFTLPIGVI, FIVQLVATVVASTVCFGTTWW, GIYPGMNWFFLIGLLAPVPFW, AKAVHYWSWAIVGVVFNYYIF, and ILSAALDAGTAIMGVLIFFAF.

It belongs to the oligopeptide OPT transporter (TC 2.A.67.1) family. As to expression, highly expressed in flowers, and moderately expressed in leaves and stems.

It is found in the membrane. Its function is as follows. Involved in the translocation of tetra- and pentapeptides across the cellular membrane in an energy-dependent manner. This is Oligopeptide transporter 1 (OPT1) from Arabidopsis thaliana (Mouse-ear cress).